The sequence spans 318 residues: Ribonuclease Z (318 aa).

Residues H62, H64, D66, H67, H139, D210, and H268 each coordinate Zn(2+). D66 (proton acceptor) is an active-site residue.

This sequence belongs to the RNase Z family. As to quaternary structure, homodimer. The cofactor is Zn(2+).

It carries out the reaction Endonucleolytic cleavage of RNA, removing extra 3' nucleotides from tRNA precursor, generating 3' termini of tRNAs. A 3'-hydroxy group is left at the tRNA terminus and a 5'-phosphoryl group is left at the trailer molecule.. Its function is as follows. Zinc phosphodiesterase, which displays some tRNA 3'-processing endonuclease activity. Probably involved in tRNA maturation, by removing a 3'-trailer from precursor tRNA. The sequence is that of Ribonuclease Z from Gloeothece citriformis (strain PCC 7424) (Cyanothece sp. (strain PCC 7424)).